Consider the following 225-residue polypeptide: Uridylate kinase (225 aa).

Residue 9–10 (GS) coordinates ATP. Glycine 46 is a UMP binding site. Residues glycine 47 and arginine 51 each contribute to the ATP site. Residues aspartate 67 and 115 to 121 (THPAHTT) each bind UMP. The ATP site is built by threonine 141, asparagine 142, tyrosine 147, and aspartate 150.

This sequence belongs to the UMP kinase family. As to quaternary structure, homohexamer.

It localises to the cytoplasm. The catalysed reaction is UMP + ATP = UDP + ADP. The protein operates within pyrimidine metabolism; CTP biosynthesis via de novo pathway; UDP from UMP (UMPK route): step 1/1. Inhibited by UTP. Its function is as follows. Catalyzes the reversible phosphorylation of UMP to UDP. The sequence is that of Uridylate kinase from Methanococcus vannielii (strain ATCC 35089 / DSM 1224 / JCM 13029 / OCM 148 / SB).